The sequence spans 166 residues: Interferon gamma (166 aa).

The N-terminal stretch at 1 to 23 is a signal peptide; sequence MNYTSYILAFQLCVILGSSGCYC. The residue at position 24 (Q24) is a Pyrrolidone carboxylic acid. 2 N-linked (GlcNAc...) asparagine glycosylation sites follow: N39 and N106. Residues 147 to 166 are disordered; sequence SNLRKRKRRQNQIQGRRASK.

This sequence belongs to the type II (or gamma) interferon family. Homodimer. Interacts with IFNGR1 (via extracellular domain); this interaction promotes IFNGR1 dimerization. In terms of tissue distribution, released primarily from activated T lymphocytes.

The protein resides in the secreted. In terms of biological role, type II interferon produced by immune cells such as T-cells and NK cells that plays crucial roles in antimicrobial, antiviral, and antitumor responses by activating effector immune cells and enhancing antigen presentation. Primarily signals through the JAK-STAT pathway after interaction with its receptor IFNGR1 to affect gene regulation. Upon IFNG binding, IFNGR1 intracellular domain opens out to allow association of downstream signaling components JAK2, JAK1 and STAT1, leading to STAT1 activation, nuclear translocation and transcription of IFNG-regulated genes. Many of the induced genes are transcription factors such as IRF1 that are able to further drive regulation of a next wave of transcription. Plays a role in class I antigen presentation pathway by inducing a replacement of catalytic proteasome subunits with immunoproteasome subunits. In turn, increases the quantity, quality, and repertoire of peptides for class I MHC loading. Increases the efficiency of peptide generation also by inducing the expression of activator PA28 that associates with the proteasome and alters its proteolytic cleavage preference. Up-regulates as well MHC II complexes on the cell surface by promoting expression of several key molecules such as cathepsins B/CTSB, H/CTSH, and L/CTSL. Participates in the regulation of hematopoietic stem cells during development and under homeostatic conditions by affecting their development, quiescence, and differentiation. This Lama glama (Llama) protein is Interferon gamma (IFNG).